Here is a 389-residue protein sequence, read N- to C-terminus: Acetylornithine aminotransferase (389 aa).

Residues 96–97 (GT) and F123 each bind pyridoxal 5'-phosphate. R126 contributes to the N(2)-acetyl-L-ornithine binding site. Residue 207–210 (DEVQ) participates in pyridoxal 5'-phosphate binding. At K236 the chain carries N6-(pyridoxal phosphate)lysine. A N(2)-acetyl-L-ornithine-binding site is contributed by S264. A pyridoxal 5'-phosphate-binding site is contributed by T265.

This sequence belongs to the class-III pyridoxal-phosphate-dependent aminotransferase family. ArgD subfamily. In terms of assembly, homodimer. Pyridoxal 5'-phosphate serves as cofactor.

The protein localises to the cytoplasm. It catalyses the reaction N(2)-acetyl-L-ornithine + 2-oxoglutarate = N-acetyl-L-glutamate 5-semialdehyde + L-glutamate. Its pathway is amino-acid biosynthesis; L-arginine biosynthesis; N(2)-acetyl-L-ornithine from L-glutamate: step 4/4. The polypeptide is Acetylornithine aminotransferase (Lactiplantibacillus plantarum (strain ATCC BAA-793 / NCIMB 8826 / WCFS1) (Lactobacillus plantarum)).